A 197-amino-acid polypeptide reads, in one-letter code: Carnitine operon protein CaiE (197 aa).

This sequence belongs to the transferase hexapeptide repeat family.

It participates in amine and polyamine metabolism; carnitine metabolism. Functionally, overproduction of CaiE stimulates the activity of CaiB and CaiD. The polypeptide is Carnitine operon protein CaiE (Citrobacter koseri (strain ATCC BAA-895 / CDC 4225-83 / SGSC4696)).